A 159-amino-acid chain; its full sequence is Endoribonuclease YbeY (159 aa).

Residues histidine 114, histidine 118, and histidine 124 each coordinate Zn(2+).

This sequence belongs to the endoribonuclease YbeY family. Zn(2+) is required as a cofactor.

It is found in the cytoplasm. In terms of biological role, single strand-specific metallo-endoribonuclease involved in late-stage 70S ribosome quality control and in maturation of the 3' terminus of the 16S rRNA. The chain is Endoribonuclease YbeY from Pectobacterium carotovorum subsp. carotovorum (strain PC1).